A 143-amino-acid chain; its full sequence is AP-2 complex subunit sigma (143 aa).

Belongs to the adaptor complexes small subunit family. In terms of assembly, adaptor protein complex 2 (AP-2) is a heterotetramer composed of two large adaptins (alpha-type subunit APL3 and beta-type subunit APL1), a medium chain (mu-type subunit APM4) and a small adaptin (sigma-type subunit APS2).

The protein resides in the cell membrane. It localises to the membrane. It is found in the coated pit. Functionally, component of the adaptor complexes which link clathrin to receptors in coated vesicles. Clathrin-associated protein complexes are believed to interact with the cytoplasmic tails of membrane proteins, leading to their selection and concentration. This chain is AP-2 complex subunit sigma (aps-2), found in Neurospora crassa (strain ATCC 24698 / 74-OR23-1A / CBS 708.71 / DSM 1257 / FGSC 987).